Reading from the N-terminus, the 547-residue chain is Chaperonin GroEL 1 (547 aa).

ATP-binding positions include threonine 30–proline 33, lysine 51, aspartate 87–threonine 91, glycine 415, and aspartate 495.

The protein belongs to the chaperonin (HSP60) family. As to quaternary structure, forms a cylinder of 14 subunits composed of two heptameric rings stacked back-to-back. Interacts with the co-chaperonin GroES.

It localises to the cytoplasm. The catalysed reaction is ATP + H2O + a folded polypeptide = ADP + phosphate + an unfolded polypeptide.. In terms of biological role, together with its co-chaperonin GroES, plays an essential role in assisting protein folding. The GroEL-GroES system forms a nano-cage that allows encapsulation of the non-native substrate proteins and provides a physical environment optimized to promote and accelerate protein folding. This Azorhizobium caulinodans (strain ATCC 43989 / DSM 5975 / JCM 20966 / LMG 6465 / NBRC 14845 / NCIMB 13405 / ORS 571) protein is Chaperonin GroEL 1.